Here is a 384-residue protein sequence, read N- to C-terminus: 4-hydroxy-3-methylbut-2-en-1-yl diphosphate synthase (flavodoxin) (384 aa).

Cys-280, Cys-283, Cys-315, and Glu-322 together coordinate [4Fe-4S] cluster.

It belongs to the IspG family. It depends on [4Fe-4S] cluster as a cofactor.

The catalysed reaction is (2E)-4-hydroxy-3-methylbut-2-enyl diphosphate + oxidized [flavodoxin] + H2O + 2 H(+) = 2-C-methyl-D-erythritol 2,4-cyclic diphosphate + reduced [flavodoxin]. It participates in isoprenoid biosynthesis; isopentenyl diphosphate biosynthesis via DXP pathway; isopentenyl diphosphate from 1-deoxy-D-xylulose 5-phosphate: step 5/6. Functionally, converts 2C-methyl-D-erythritol 2,4-cyclodiphosphate (ME-2,4cPP) into 1-hydroxy-2-methyl-2-(E)-butenyl 4-diphosphate. The polypeptide is 4-hydroxy-3-methylbut-2-en-1-yl diphosphate synthase (flavodoxin) (Frankia alni (strain DSM 45986 / CECT 9034 / ACN14a)).